The sequence spans 517 residues: Methionine aminopeptidase 1b (517 aa).

The disordered stretch occupies residues 74-94 (YCNKENSNNNNNNNNNNNNNL). Low complexity predominate over residues 79 to 94 (NSNNNNNNNNNNNNNL). Residues 114–166 (ENLCSGCKKVLIKKLSCPICLKNKIFSYFCNQECFKGSWKEHQKIHENMNKEN) form a C6H2-type zinc finger. Residues C117, C120, C130, C133, C143, C147, H155, and H159 each contribute to the Zn(2+) site. H325 serves as a coordination point for a protein. Residues D342, D353, and H419 each coordinate Zn(2+). H426 is an a protein binding site. Zn(2+)-binding residues include E452 and E483.

Belongs to the peptidase M24A family. Methionine aminopeptidase type 1 subfamily. As to quaternary structure, associates with the 60S ribosomal subunit of the 80S translational complex. It depends on Zn(2+) as a cofactor. Co(2+) is required as a cofactor. Requires Mn(2+) as cofactor. Fe(2+) serves as cofactor.

The protein localises to the cytoplasm. It carries out the reaction Release of N-terminal amino acids, preferentially methionine, from peptides and arylamides.. Inhibited by pyrimidine derivative XC11. Functionally, cotranslationally removes the N-terminal methionine from nascent proteins. The N-terminal methionine is often cleaved when the second residue in the primary sequence is small and uncharged (Met-Ala-, Cys, Gly, Pro, Ser, Thr, or Val). May play an important role in parasite growth during the blood asexual stage. The protein is Methionine aminopeptidase 1b of Plasmodium falciparum (isolate 3D7).